The primary structure comprises 232 residues: Syntaxin-51 (232 aa).

The Cytoplasmic segment spans residues 1–208 (MASSSDSWMR…NKNMRSGCSC (208 aa)). The t-SNARE coiled-coil homology domain maps to 136-198 (RQVMREQDEG…RRVQKSLAVM (63 aa)). A helical; Anchor for type IV membrane protein transmembrane segment spans residues 209–229 (MSMLLSVLGIVGLAVVIWMLV). Residues 230–232 (KYM) are Vesicular-facing.

This sequence belongs to the syntaxin family. In terms of assembly, interacts with VTI11 and either SYP21, or SYP22, or SYP61 in the prevacuolar compartment, or with VTI12 and SYP61 in the trans-Golgi network to form t-SNARE complexes. Expressed in root, leaf, stem, flower and silique.

It is found in the golgi apparatus. The protein localises to the trans-Golgi network membrane. The protein resides in the prevacuolar compartment membrane. Vesicle trafficking protein that functions in the secretory pathway. This Arabidopsis thaliana (Mouse-ear cress) protein is Syntaxin-51 (SYP51).